Consider the following 137-residue polypeptide: MSSSQGGGGRGKAKTTKAVSRSSKAGLQFPVGRIARYLKAGKYAERVGAGAPVYLSAVLEYLAAEVLELAGNAARDNKKNRIVPRHIQLAVRNDEELSRLLGTVTIAAGGVLPNIQQVLLPKKGGGKGDIGSASQEF.

Positions 1-10 (MSSSQGGGGR) are enriched in gly residues. Residues 1–21 (MSSSQGGGGRGKAKTTKAVSR) form a disordered region. Serine 134 bears the Phosphoserine; by ATM and ATR mark. The [ST]-Q motif signature appears at 134-135 (SQ).

The protein belongs to the histone H2A family. In terms of assembly, the nucleosome is a histone octamer containing two molecules each of H2A, H2B, H3 and H4 assembled in one H3-H4 heterotetramer and two H2A-H2B heterodimers. The octamer wraps approximately 147 bp of DNA. Interacts with numerous proteins required for DNA damage signaling and repair when phosphorylated on Ser-134. Phosphorylated to form H2AXS139ph (gamma-H2AX) in response to DNA double strand breaks (DSBs) generated by exogenous genotoxic agents and by stalled replication forks, and may also occur during meiotic recombination events. Phosphorylation can extend up to several thousand nucleosomes from the actual site of the DSB and may mark the surrounding chromatin for recruitment of proteins required for DNA damage signaling and repair. Widespread phosphorylation may also serve to amplify the damage signal or aid repair of persistent lesions. H2AXS139ph in response to ionizing radiation is mediated by ATM while defects in DNA replication induce H2AXS139ph subsequent to activation of ATR. Dephosphorylation of H2AXS139ph by PP2A is required for DNA DSB repair.

The protein localises to the nucleus. Its subcellular location is the chromosome. In terms of biological role, variant histone H2A which replaces conventional H2A in a subset of nucleosomes. Nucleosomes wrap and compact DNA into chromatin, limiting DNA accessibility to the cellular machineries which require DNA as a template. Histones thereby play a central role in transcription regulation, DNA repair, DNA replication and chromosomal stability. DNA accessibility is regulated via a complex set of post-translational modifications of histones, also called histone code, and nucleosome remodeling. Required for checkpoint-mediated arrest of cell cycle progression in response to low doses of ionizing radiation and for efficient repair of DNA double strand breaks (DSBs) specifically when modified by C-terminal phosphorylation. The sequence is that of Probable histone H2AXa from Oryza sativa subsp. indica (Rice).